The primary structure comprises 575 residues: Isocitrate dehydrogenase kinase/phosphatase (575 aa).

ATP is bound by residues 315–321 (APGVKGM) and lysine 336. The active site involves aspartate 371.

Belongs to the AceK family.

It localises to the cytoplasm. The enzyme catalyses L-seryl-[isocitrate dehydrogenase] + ATP = O-phospho-L-seryl-[isocitrate dehydrogenase] + ADP + H(+). In terms of biological role, bifunctional enzyme which can phosphorylate or dephosphorylate isocitrate dehydrogenase (IDH) on a specific serine residue. This is a regulatory mechanism which enables bacteria to bypass the Krebs cycle via the glyoxylate shunt in response to the source of carbon. When bacteria are grown on glucose, IDH is fully active and unphosphorylated, but when grown on acetate or ethanol, the activity of IDH declines drastically concomitant with its phosphorylation. The sequence is that of Isocitrate dehydrogenase kinase/phosphatase from Yersinia pseudotuberculosis serotype O:1b (strain IP 31758).